The following is a 1116-amino-acid chain: Error-prone DNA polymerase 1 (1116 aa).

Belongs to the DNA polymerase type-C family. DnaE2 subfamily.

The protein localises to the cytoplasm. The catalysed reaction is DNA(n) + a 2'-deoxyribonucleoside 5'-triphosphate = DNA(n+1) + diphosphate. Functionally, DNA polymerase involved in damage-induced mutagenesis and translesion synthesis (TLS). It is not the major replicative DNA polymerase. In Rhizobium meliloti (strain 1021) (Ensifer meliloti), this protein is Error-prone DNA polymerase 1.